The sequence spans 1712 residues: U3 small nucleolar RNA-associated protein 10 (1712 aa).

7 HEAT repeats span residues 164–202 (EELV…GRGE), 490–528 (TCDF…ASGS), 564–605 (TLLS…PKHG), 987–1025 (TQTI…AFEH), 1236–1275 (VISL…RFGK), 1605–1646 (EEVT…DSAA), and 1667–1705 (LGLL…VLGE).

This sequence belongs to the HEATR1/UTP10 family. In terms of assembly, component of the ribosomal small subunit (SSU) processome.

It is found in the nucleus. The protein resides in the nucleolus. In terms of biological role, involved in nucleolar processing of pre-18S ribosomal RNA. Involved in ribosome biosynthesis. The protein is U3 small nucleolar RNA-associated protein 10 of Phaeosphaeria nodorum (strain SN15 / ATCC MYA-4574 / FGSC 10173) (Glume blotch fungus).